The sequence spans 147 residues: Large ribosomal subunit protein bL9 (147 aa).

Belongs to the bacterial ribosomal protein bL9 family.

Functionally, binds to the 23S rRNA. The polypeptide is Large ribosomal subunit protein bL9 (Shouchella clausii (strain KSM-K16) (Alkalihalobacillus clausii)).